We begin with the raw amino-acid sequence, 188 residues long: Probable DNA-directed RNA polymerase subunit delta (188 aa).

Residues 14-83 (LSMIEVARAI…GENKWGLRSW (70 aa)) form the HTH HARE-type domain. The segment at 119–188 (EDAIDYSADD…EDEEDEEEEE (70 aa)) is disordered.

Belongs to the RpoE family. RNAP is composed of a core of 2 alpha, a beta and a beta' subunits. The core is associated with a delta subunit and one of several sigma factors.

Participates in both the initiation and recycling phases of transcription. In the presence of the delta subunit, RNAP displays an increased specificity of transcription, a decreased affinity for nucleic acids, and an increased efficiency of RNA synthesis because of enhanced recycling. This is Probable DNA-directed RNA polymerase subunit delta from Streptococcus equi subsp. equi (strain 4047).